Consider the following 428-residue polypeptide: MSYLVTIIAFIIVFGVLVTVHEYGHMFFAKRAGIMCPEFAIGMGPKIFSFRKNETLYTIRLLPVGGYVRMAGDGLEEPPVEPGMNVKIKLNEENEITHIILDDHHKFQQIEAIEVKKCDFKDDLFIEGITAYDNERHHFKIARKSFFVENGSLVQIAPRDRQFAHKKPWPKFLTLFAGPLFNFILALVLFIGLAYYQGTPTSTVEQVADKYPAQQAGLQKGDKIVQIGKYKISEFDDVDKALDKVKDNKTTVKFERDGKTKSVELTPKKTERKLTKVSSETKYVLGFQPASEHTLFKPIVYGFESFLKGSTLIFTAVVGMLASIFTGGFSFDMLNGPVGIYHNVDSVVKAGIISLIGYTALLSVNLGIMNLIPIPALDGGRILFVIYEAIFRKPVNKKAETTIIAIGAIFMVVIMILVTWNDIRRYFL.

His-21 lines the Zn(2+) pocket. Residue Glu-22 is part of the active site. A Zn(2+)-binding site is contributed by His-25. 4 helical membrane passes run 172–194 (FLTLFAGPLFNFILALVLFIGLA), 309–331 (GSTLIFTAVVGMLASIFTGGFSF), 352–374 (IISLIGYTALLSVNLGIMNLIPI), and 401–420 (TTIIAIGAIFMVVIMILVTW). The region spanning 186–269 (ALVLFIGLAY…TKSVELTPKK (84 aa)) is the PDZ domain.

It belongs to the peptidase M50B family. Zn(2+) serves as cofactor.

The protein localises to the cell membrane. In Staphylococcus aureus (strain N315), this protein is Putative zinc metalloprotease SA1105.